Consider the following 666-residue polypeptide: Probable potassium transport system protein Kup (666 aa).

The next 12 helical transmembrane spans lie at 16–36, 58–78, 99–119, 141–161, 167–187, 221–241, 253–273, 292–312, 343–363, 373–393, 402–422, and 424–444; these read GFII…LYTM, ISLI…LVAL, TPWL…DGAL, IFQN…LLFA, TGVI…FLGI, IFIL…YSDL, WPFV…WILA, FTMH…QALI, TYIP…VLLF, YGLA…FFLI, VLLM…ASAV, and FMHG…IMTI.

This sequence belongs to the HAK/KUP transporter (TC 2.A.72) family.

It localises to the cell membrane. It catalyses the reaction K(+)(in) + H(+)(in) = K(+)(out) + H(+)(out). Transport of potassium into the cell. Likely operates as a K(+):H(+) symporter. This Streptococcus agalactiae serotype Ia (strain ATCC 27591 / A909 / CDC SS700) protein is Probable potassium transport system protein Kup.